Reading from the N-terminus, the 164-residue chain is MDLKQIEKLMIAMGRNKMKRIVIKREGLELELERDTVPSIQEPVFYDNRLFAGFSQERPIPTDQNLGNPIVKESIEKKESEAPAQGDFIVSPLVGTFYGSPSPEAPAFIKPGDTVSEDTVVCIVEAMKVMNEVKAGMSGRVEEILITNGDPVQFGSKLFRIVKA.

The Biotinyl-binding domain occupies 86–162 (GDFIVSPLVG…QFGSKLFRIV (77 aa)). Lys-128 carries the N6-biotinyllysine modification.

Homodimer.

It participates in lipid metabolism; fatty acid biosynthesis. This protein is a component of the acetyl coenzyme A carboxylase complex; first, biotin carboxylase catalyzes the carboxylation of the carrier protein and then the transcarboxylase transfers the carboxyl group to form malonyl-CoA. The polypeptide is Biotin carboxyl carrier protein of acetyl-CoA carboxylase (accB) (Chlamydia trachomatis serovar D (strain ATCC VR-885 / DSM 19411 / UW-3/Cx)).